The primary structure comprises 467 residues: F-box only protein 6 (467 aa).

The region spanning 114-163 (QEIWQEFPQDLFEDVVSRLPMATFFQFRAVCRKWNALIDSDSFSRCFTEL) is the F-box domain. 3 Kelch repeats span residues 163–211 (LPQT…MASA), 252–305 (GMTL…NFKS), and 406–456 (CLGN…IACG).

This chain is F-box only protein 6 (FBX6), found in Arabidopsis thaliana (Mouse-ear cress).